The primary structure comprises 518 residues: MDFGVKDGRIIGFGEYRGTREYDLSGAYVVPGLIDAHVHIESSLLAPAEYARLVLAHGTTTVIADPHEIANVCGAPGIDYMLAQGARTPLDILVMLPSCVPATPFDAGGAVLTAADLARFRGREGVVGLAEVMNVPGVLFGDEDLRAKMDLFEVVDGHAPFLSGKDLNAYIYAGVQSDHECTALPEAREKLLRGMYVMIREGSTERNLHDLLPLVDACTAPRCCFATDDRHADMLAGEGHIDDCVRKAVSGGLEVEQALRMATLSAAGRFGLHDRGALAPGRLADFCVADDPDRFRVLRTFKRGVEVVDAGYLPPACPKSPMHARVPEPGDIRITGRGEARVIEIVPGQITTRDLRYPVDAAGIPDLDRDILKAVVIDRYRATGSGVGLVHGFHLQEGAIAGSVSHDSHNIVAVGAGDADIVRAVAEVVRLGGGLAVVSGDDITALPLECAGLMSALPYDEVVRRLAALEEHARRLGAIANPFMYLSFLALTVIPEVRVTERGVFDVGAFTDVPLFEE.

This sequence belongs to the metallo-dependent hydrolases superfamily. Adenine deaminase family. It depends on Mn(2+) as a cofactor.

The enzyme catalyses adenine + H2O + H(+) = hypoxanthine + NH4(+). The sequence is that of Adenine deaminase from Methanoculleus marisnigri (strain ATCC 35101 / DSM 1498 / JR1).